The chain runs to 156 residues: Transcription antitermination protein NusB (156 aa).

Belongs to the NusB family.

Functionally, involved in transcription antitermination. Required for transcription of ribosomal RNA (rRNA) genes. Binds specifically to the boxA antiterminator sequence of the ribosomal RNA (rrn) operons. The protein is Transcription antitermination protein NusB of Xanthomonas oryzae pv. oryzae (strain MAFF 311018).